The following is a 572-amino-acid chain: Urease subunit alpha (572 aa).

One can recognise a Urease domain in the interval 136–572; that stretch reads GGIDTHIHWI…VPLAQRYFLF (437 aa). Ni(2+)-binding residues include histidine 141, histidine 143, and lysine 224. Lysine 224 carries the N6-carboxylysine modification. Histidine 226 lines the substrate pocket. 2 residues coordinate Ni(2+): histidine 253 and histidine 279. Catalysis depends on histidine 327, which acts as the Proton donor. Aspartate 367 provides a ligand contact to Ni(2+).

It belongs to the metallo-dependent hydrolases superfamily. Urease alpha subunit family. Heterotrimer of UreA (gamma), UreB (beta) and UreC (alpha) subunits. Three heterotrimers associate to form the active enzyme. Ni cation serves as cofactor. In terms of processing, carboxylation allows a single lysine to coordinate two nickel ions.

The protein localises to the cytoplasm. It catalyses the reaction urea + 2 H2O + H(+) = hydrogencarbonate + 2 NH4(+). The protein operates within nitrogen metabolism; urea degradation; CO(2) and NH(3) from urea (urease route): step 1/1. This is Urease subunit alpha from Actinobacillus pleuropneumoniae serotype 3 (strain JL03).